A 516-amino-acid chain; its full sequence is Flavin-dependent halogenase armH2 (516 aa).

3 residues coordinate FAD: G16, A19, and E49. 2 residues coordinate chloride: S328 and G329. I330 provides a ligand contact to FAD. The segment at 440 to 475 is disordered; sequence PQANGNGAAKQDAVPAPIPVALSSGAGPEKDAKRRE.

Belongs to the flavin-dependent halogenase family.

The enzyme catalyses melleolide F + FADH2 + chloride + O2 = 6'-chloromelleolide F + FAD + 2 H2O + H(+). Flavin-dependent halogenase involved in the biosynthesis of melleolides, a range of antifungal and phytotoxic polyketide derivatives composed of an orsellinic acid (OA) moiety esterified to various sesquiterpene alcohols. The halogenase catalyzes the transfer of a single chlorine atom to the melleolide backbone, resulting in a 6'-chloromelleolide product. The enzyme acts on free substrate and does not depend on carrier-protein-dependent acceptor molecules. This chain is Flavin-dependent halogenase armH2, found in Armillaria mellea (Honey mushroom).